Reading from the N-terminus, the 130-residue chain is Small ribosomal subunit protein uS9 (130 aa).

This sequence belongs to the universal ribosomal protein uS9 family.

The protein is Small ribosomal subunit protein uS9 of Shewanella baltica (strain OS155 / ATCC BAA-1091).